A 35-amino-acid chain; its full sequence is Trypsin inhibitor 1 (35 aa).

Intrachain disulfides connect Cys2–Cys19, Cys9–Cys23, and Cys18–Cys34.

In terms of biological role, trypsin inhibitor. The polypeptide is Trypsin inhibitor 1 (Spinacia oleracea (Spinach)).